Reading from the N-terminus, the 83-residue chain is MALMITDECINCDVCEPECPNGAISQGDETYVIEPSLCTECVGHYETSQCVEVCPVDCIIKDPSHEETEDELRAKYERITGEG.

2 consecutive 4Fe-4S ferredoxin-type domains span residues 2 to 29 and 31 to 64; these read ALMI…QGDE and YVIE…KDPS. [4Fe-4S] cluster-binding residues include Cys9, Cys12, Cys15, Cys19, Cys38, Cys41, Cys50, and Cys54.

It depends on [4Fe-4S] cluster as a cofactor.

Ferredoxins are iron-sulfur proteins that transfer electrons in a wide variety of metabolic reactions. The protein is Ferredoxin (fdx) of Allochromatium vinosum (strain ATCC 17899 / DSM 180 / NBRC 103801 / NCIMB 10441 / D) (Chromatium vinosum).